We begin with the raw amino-acid sequence, 24 residues long: Formate ester dehydrogenase gamma chain (24 aa).

Heterotrimer composed of an alpha, a beta and a gamma chain.

This chain is Formate ester dehydrogenase gamma chain, found in Amycolatopsis methanolica.